Here is a 501-residue protein sequence, read N- to C-terminus: Calcium-dependent protein kinase 4 (501 aa).

One can recognise a Protein kinase domain in the interval Y25 to I283. ATP contacts are provided by residues L31 to T39 and K54. Residue D149 is the Proton acceptor of the active site. S189 bears the Phosphoserine mark. Residues A289–I319 form an autoinhibitory domain region. EF-hand domains are found at residues E326–E361, L362–M397, E398–C433, and L437–V467. Positions 339, 341, 343, 345, 350, 375, 377, 379, 381, 386, 411, 413, 415, 417, 422, 445, 447, 449, 451, and 456 each coordinate Ca(2+).

It belongs to the protein kinase superfamily. Ser/Thr protein kinase family. CDPK subfamily. As to quaternary structure, interacts with Di19.

The protein localises to the cytoplasm. It localises to the nucleus. The enzyme catalyses L-seryl-[protein] + ATP = O-phospho-L-seryl-[protein] + ADP + H(+). It carries out the reaction L-threonyl-[protein] + ATP = O-phospho-L-threonyl-[protein] + ADP + H(+). With respect to regulation, activated by calcium. Autophosphorylation may play an important role in the regulation of the kinase activity. Functionally, may play a role in signal transduction pathways that involve calcium as a second messenger. Functions as a regulator of the calcium-mediated abscisic acid (ABA) signaling pathway. Phosphorylates ABA-responsive transcription factors ABF1 and ABF4 in vitro. Phosphorylates the nuclear zinc finger Di19 in vitro. The sequence is that of Calcium-dependent protein kinase 4 (CPK4) from Arabidopsis thaliana (Mouse-ear cress).